The following is a 474-amino-acid chain: CUGBP Elav-like family member 4 (474 aa).

Residues 1-287 (MYIKMATLAN…AAFAAAQMQQ (287 aa)) are sufficient for RNA-binding and MSE-dependent splicing activity. Polar residues predominate over residues 18-28 (LSTNGLGSSPG). The interval 18 to 41 (LSTNGLGSSPGSAGHMNGLSHSPG) is disordered. RRM domains lie at 54-135 (IKLF…PADS) and 141-221 (RKLF…FADT). The necessary for TNNT2 exon 5 inclusion stretch occupies residues 228 to 247 (RRMQQMAGQMGMFNPMAIPF). The 76-residue stretch at 392–467 (PQPPPMIPQQ…KRLKVQLKRP (76 aa)) folds into the RRM 3 domain.

The protein belongs to the CELF/BRUNOL family.

It is found in the nucleus. The protein resides in the cytoplasm. In terms of biological role, RNA-binding protein implicated in the regulation of pre-mRNA alternative splicing. Mediates exon inclusion and/or exclusion in pre-mRNA that are subject to tissue-specific and developmentally regulated alternative splicing. Specifically activates exon 5 inclusion of cardiac isoforms of TNNT2 during heart remodeling at the juvenile to adult transition. Promotes exclusion of both the smooth muscle (SM) and non-muscle (NM) exons in actinin pre-mRNAs. Activates the splicing of MAPT/Tau exon 10. Binds to muscle-specific splicing enhancer (MSE) intronic sites flanking the alternative exon 5 of TNNT2 pre-mRNA. The sequence is that of CUGBP Elav-like family member 4 (CELF4) from Macaca fascicularis (Crab-eating macaque).